A 380-amino-acid polypeptide reads, in one-letter code: Ubiquitin-like protein 7 (380 aa).

In terms of domain architecture, Ubiquitin-like spans 18 to 98 (TPKSILRLPE…VLRKSWPEPD (81 aa)). The disordered stretch occupies residues 200–313 (APMPGTDSSS…SSGVQSGTPI (114 aa)). Residues 206–221 (DSSSRSMPSSSYRDMP) are compositionally biased toward low complexity. S230 carries the post-translational modification Phosphoserine. Composition is skewed to low complexity over residues 240 to 253 (TRST…SSRP) and 270 to 293 (SELA…TPGT). A compositionally biased stretch (polar residues) spans 294-313 (QGHSSGTSPMSSGVQSGTPI). One can recognise a UBA domain in the interval 333 to 377 (SLQSQWQPQLQQLRDMGIQDDELSLRALQATGGDIQAALELIFAG).

In terms of assembly, binds ubiquitin. Interacts with MAVS; this interaction enhances TRIM21-dependent 'Lys-27'-linked polyubiquitination of MAVS. In terms of processing, deubiquitinated by OTUD4 which stabilizes UBL7 expression. As to expression, ubiquitous. Highly expressed in heart, skeletal muscle, testis, thyroid and adrenal gland.

Its function is as follows. Interferon-stimulated protein that positively regulates RNA virus-triggered innate immune signaling. Mechanistically, promotes 'Lys-27'-linked polyubiquitination of MAVS through TRIM21 leading to enhanced the IFN signaling pathway. This chain is Ubiquitin-like protein 7 (UBL7), found in Homo sapiens (Human).